Consider the following 227-residue polypeptide: uncharacterized protein (227 aa).

Transmembrane regions (helical) follow at residues Ile-113–Phe-133 and Phe-141–Ile-161.

Its subcellular location is the membrane. This is an uncharacterized protein from Dictyostelium discoideum (Social amoeba).